A 798-amino-acid chain; its full sequence is Putative antiporter subunit mnhA2 (798 aa).

The next 21 helical transmembrane spans lie at 1–21 (MSLV…LFTL), 33–53 (IALL…PSVM), 78–98 (GLSL…VYYA), 109–129 (LPRF…IVTA), 133–153 (ILMY…IVYW), 167–187 (FMIT…IYIV), 209–229 (FIPI…QFPF), 241–261 (TPVS…FLLF), 272–292 (FYIY…AVNA), 300–320 (AILA…VGLG), 337–357 (MILF…GALF), 381–401 (VFPI…GIPF), 431–451 (IITV…VYMI), 472–492 (PFLF…IFFI), 526–546 (GFNL…IMAL), 593–613 (ITIT…QAGF), 625–645 (GPIE…LTFI), 649–669 (LTMV…FILM), 674–694 (LALT…VSFS), 710–730 (AVKI…VFIA), and 766–786 (IDTL…YTLL).

Belongs to the CPA3 antiporters (TC 2.A.63) subunit A family. As to quaternary structure, may form a heterooligomeric complex that consists of seven subunits: mnhA2, mnhB2, mnhC2, mnhD2, mnhE2, mnhF2 and mnhG2.

Its subcellular location is the cell membrane. The protein is Putative antiporter subunit mnhA2 (mnhA2) of Staphylococcus saprophyticus subsp. saprophyticus (strain ATCC 15305 / DSM 20229 / NCIMB 8711 / NCTC 7292 / S-41).